A 430-amino-acid polypeptide reads, in one-letter code: Enolase (430 aa).

(2R)-2-phosphoglycerate is bound at residue Q163. Residue E205 is the Proton donor of the active site. D242, E285, and D312 together coordinate Mg(2+). Positions 337, 366, 367, and 388 each coordinate (2R)-2-phosphoglycerate. The active-site Proton acceptor is the K337.

The protein belongs to the enolase family. The cofactor is Mg(2+).

Its subcellular location is the cytoplasm. It localises to the secreted. It is found in the cell surface. The catalysed reaction is (2R)-2-phosphoglycerate = phosphoenolpyruvate + H2O. It functions in the pathway carbohydrate degradation; glycolysis; pyruvate from D-glyceraldehyde 3-phosphate: step 4/5. Functionally, catalyzes the reversible conversion of 2-phosphoglycerate (2-PG) into phosphoenolpyruvate (PEP). It is essential for the degradation of carbohydrates via glycolysis. The protein is Enolase of Rubrobacter xylanophilus (strain DSM 9941 / JCM 11954 / NBRC 16129 / PRD-1).